Consider the following 426-residue polypeptide: 4-hydroxy-3-methylbut-2-en-1-yl diphosphate synthase (flavodoxin) (426 aa).

The [4Fe-4S] cluster site is built by C310, C313, C356, and E363.

This sequence belongs to the IspG family. Requires [4Fe-4S] cluster as cofactor.

The enzyme catalyses (2E)-4-hydroxy-3-methylbut-2-enyl diphosphate + oxidized [flavodoxin] + H2O + 2 H(+) = 2-C-methyl-D-erythritol 2,4-cyclic diphosphate + reduced [flavodoxin]. The protein operates within isoprenoid biosynthesis; isopentenyl diphosphate biosynthesis via DXP pathway; isopentenyl diphosphate from 1-deoxy-D-xylulose 5-phosphate: step 5/6. In terms of biological role, converts 2C-methyl-D-erythritol 2,4-cyclodiphosphate (ME-2,4cPP) into 1-hydroxy-2-methyl-2-(E)-butenyl 4-diphosphate. The polypeptide is 4-hydroxy-3-methylbut-2-en-1-yl diphosphate synthase (flavodoxin) (Rhodopseudomonas palustris (strain BisA53)).